A 156-amino-acid chain; its full sequence is ATP synthase subunit b (156 aa).

A helical membrane pass occupies residues 7–29 (LFAQMVVFLVLAWFTMKFVWPPL).

The protein belongs to the ATPase B chain family. As to quaternary structure, F-type ATPases have 2 components, F(1) - the catalytic core - and F(0) - the membrane proton channel. F(1) has five subunits: alpha(3), beta(3), gamma(1), delta(1), epsilon(1). F(0) has three main subunits: a(1), b(2) and c(10-14). The alpha and beta chains form an alternating ring which encloses part of the gamma chain. F(1) is attached to F(0) by a central stalk formed by the gamma and epsilon chains, while a peripheral stalk is formed by the delta and b chains.

Its subcellular location is the cell inner membrane. Functionally, f(1)F(0) ATP synthase produces ATP from ADP in the presence of a proton or sodium gradient. F-type ATPases consist of two structural domains, F(1) containing the extramembraneous catalytic core and F(0) containing the membrane proton channel, linked together by a central stalk and a peripheral stalk. During catalysis, ATP synthesis in the catalytic domain of F(1) is coupled via a rotary mechanism of the central stalk subunits to proton translocation. Its function is as follows. Component of the F(0) channel, it forms part of the peripheral stalk, linking F(1) to F(0). The sequence is that of ATP synthase subunit b from Burkholderia lata (strain ATCC 17760 / DSM 23089 / LMG 22485 / NCIMB 9086 / R18194 / 383).